Reading from the N-terminus, the 90-residue chain is Chaplin-G (90 aa).

The N-terminal stretch at 1-27 (MSRIAKAAGVALGTGAVVLSGTGMAMA) is a signal peptide. In terms of domain architecture, Chaplin spans 38-78 (SPGVLSGNVVQVPVHVPVNLCGNTIDVIGLLNPAFGNACEN). Cysteines 58 and 76 form a disulfide.

This sequence belongs to the chaplin family. Short chaplin subfamily.

It localises to the cell surface. The protein resides in the secreted. The protein localises to the cell wall. Its function is as follows. One of 8 partially redundant surface-active proteins required for efficient formation of aerial mycelium; the short chaplins assemble into a hydrophobic, amyloidal fibrillar surface layer that envelopes and protects aerial hyphae and spores, presumably anchored to the long chaplins. Chaplins have an overlapping function with the surface-active SapB peptide; chaplins are essential on minimal medium while on rich medium both chaplins and SapB are required for efficient aerial hyphae formation. Chaplins are also involved in cell attachment to a hydrophobic surface. Forms amyloid fibrils in vitro probably composed of stacked beta-sheets, at low extracellular concentrations individually restores the ability to form aerial hyphae to a chaplin-deficient strain. A small chaplin extract (ChpD, ChpE, ChpF, ChpG and ChpH) self-assembles into 2 different amyloids; small fibrils at the air-water interface form an amphipathic membrane that resembles spore-surface structures involved in aerial hyphae formation, and hydrophilic fibrils in solution that resemble the fibers that attach cells to a hydrophobic surface. At the air-water interface the hydrophilic surface is in contact with water (probably equivalent to the peptidoglycan layer), while the hydrophobic face is exposed to the air, making the surface of the aerial hyphae hydrophobic. A small chaplin extract applied to a chaplin-deficient strain restores aerial hyphae formation. The small chaplin extract forms an amyloid-like structure similar to that seen on the surface of cells without rodlets (rdlA-rdlB deletions), and is highly surface active, reducing surface tension from 72 to 26 mJ/m(2), which probably allows escape of hyphae from an aqueous environment into air. ChpF and ChpG are sufficient to restore the rodlet layer and hydrophobicity to a strain deleted for the other 6 chaplin genes. In Streptomyces coelicolor (strain ATCC BAA-471 / A3(2) / M145), this protein is Chaplin-G.